A 409-amino-acid polypeptide reads, in one-letter code: Arginine deiminase (409 aa).

Cys-399 serves as the catalytic Amidino-cysteine intermediate.

The protein belongs to the arginine deiminase family.

Its subcellular location is the cytoplasm. It catalyses the reaction L-arginine + H2O = L-citrulline + NH4(+). Its pathway is amino-acid degradation; L-arginine degradation via ADI pathway; carbamoyl phosphate from L-arginine: step 1/2. In Borrelia recurrentis (strain A1), this protein is Arginine deiminase.